Reading from the N-terminus, the 579-residue chain is Arginine--tRNA ligase (579 aa).

A 'HIGH' region motif is present at residues 127-137 (ANPTGPLHVGH).

The protein belongs to the class-I aminoacyl-tRNA synthetase family. In terms of assembly, monomer.

The protein localises to the cytoplasm. The enzyme catalyses tRNA(Arg) + L-arginine + ATP = L-arginyl-tRNA(Arg) + AMP + diphosphate. The sequence is that of Arginine--tRNA ligase from Acidithiobacillus ferrooxidans (strain ATCC 23270 / DSM 14882 / CIP 104768 / NCIMB 8455) (Ferrobacillus ferrooxidans (strain ATCC 23270)).